Here is a 110-residue protein sequence, read N- to C-terminus: Body wall hemoglobin (110 aa).

A Globin domain is found at 2 to 110 (VNWAAVVDAF…GAVDAIISHF (109 aa)). Residue histidine 70 participates in heme binding.

This sequence belongs to the globin family. As to quaternary structure, homotetramer.

This chain is Body wall hemoglobin, found in Cerebratulus lacteus (Milky ribbon worm).